A 407-amino-acid polypeptide reads, in one-letter code: MALTLAATALVLLPLVTAQQIGSIAENHPELTTYRCSSQAGCVAQSTSVVLDINAHWIHQNGAQTSCTTSSGLDPSLCPDKVTCSQNCVVEGITDYSSFGVQNSGDAMTLRQYQVQNGQIKTLRPRVYLLAEDGINYSKLQLLNQEFTFDVDASKLPCGMNGALYLSEMDASGGRSALNPAGATYGTGYCDAQCFNPGPWINGEANTAGAGACCQEMDLWEANSRSTIFSPHPCTTAGLYACTGAECYSICDGYGCTYNPYELGAKDYYGYGLTIDTAKPITVVTQFMTADNTATGTLAEIRRLYVQDGKVIGNTAVAMTEAFCSSSRTFEELGGLQRMGEALGRGMVPVFSIWDDPGLWMHWLDSDGAGPCGNTEGDPAFIQANYPNTAVTFSKVRWGDIGSTYSS.

The signal sequence occupies residues 1–18 (MALTLAATALVLLPLVTA). N136 carries N-linked (GlcNAc...) asparagine glycosylation. Residue E216 is the Nucleophile of the active site. E221 functions as the Proton donor in the catalytic mechanism.

This sequence belongs to the glycosyl hydrolase 7 (cellulase C) family.

The protein localises to the secreted. It catalyses the reaction Endohydrolysis of (1-&gt;4)-beta-D-glucosidic linkages in cellulose, lichenin and cereal beta-D-glucans.. Has endoglucanase activity on substrates containing beta-1,4 glycosidic bonds, like in carboxymethylcellulose (CMC), hydroxyethylcellulose (HEC) and beta-glucan. Involved in the degradation of complex natural cellulosic substrates. This is Probable endo-beta-1,4-glucanase celB (celB) from Neosartorya fischeri (strain ATCC 1020 / DSM 3700 / CBS 544.65 / FGSC A1164 / JCM 1740 / NRRL 181 / WB 181) (Aspergillus fischerianus).